The sequence spans 202 residues: Matrix protein (202 aa).

Residues 13 to 32 are disordered; sequence DEEIPKPGTPSAPPDDDDLW. A PPXY motif motif is present at residues 35–38; the sequence is PPEY.

This sequence belongs to the lyssavirus matrix protein family. Homomultimer. Interacts with nucleoprotein and with the cytoplasmic domain of glycoprotein.

Its subcellular location is the virion membrane. It is found in the host endomembrane system. Functionally, plays a major role in assembly and budding of virion. Completely covers the ribonucleoprotein coil and keep it in condensed bullet-shaped form. Inhibits viral transcription and stimulates replication. Plays a major role in early induction of TRAIL-mediated apoptosis in infected neurons. The sequence is that of Matrix protein (M) from Lagos bat virus (LBV).